Consider the following 206-residue polypeptide: Protein-methionine-sulfoxide reductase heme-binding subunit MsrQ (206 aa).

Transmembrane regions (helical) follow at residues 7–27 (IIIH…LLSG), 43–63 (FLGF…KVFY), 77–97 (LGLW…ALEL), 112–132 (GYLI…LSSW), 142–162 (WWFY…IHYV), and 172–192 (SMLY…GLFI).

The protein belongs to the MsrQ family. As to quaternary structure, heterodimer of a catalytic subunit (MsrP) and a heme-binding subunit (MsrQ). The cofactor is FMN. It depends on heme b as a cofactor.

The protein resides in the cell inner membrane. In terms of biological role, part of the MsrPQ system that repairs oxidized periplasmic proteins containing methionine sulfoxide residues (Met-O), using respiratory chain electrons. Thus protects these proteins from oxidative-stress damage caused by reactive species of oxygen and chlorine generated by the host defense mechanisms. MsrPQ is essential for the maintenance of envelope integrity under bleach stress, rescuing a wide series of structurally unrelated periplasmic proteins from methionine oxidation. MsrQ provides electrons for reduction to the reductase catalytic subunit MsrP, using the quinone pool of the respiratory chain. This chain is Protein-methionine-sulfoxide reductase heme-binding subunit MsrQ, found in Pasteurella multocida (strain Pm70).